Consider the following 38-residue polypeptide: Potassium channel toxin alpha-KTx 3.12 (38 aa).

3 cysteine pairs are disulfide-bonded: cysteine 8-cysteine 28, cysteine 14-cysteine 33, and cysteine 18-cysteine 35. A Lysine amide modification is found at lysine 38.

The protein belongs to the short scorpion toxin superfamily. Potassium channel inhibitor family. Alpha-KTx 03 subfamily. Expressed by the venom gland.

Its subcellular location is the secreted. In terms of biological role, potent inhibitor of voltage-dependent potassium channels, with a preference for Kv1.3/KCNA3 versus Kv1.2/KCNA2. This chain is Potassium channel toxin alpha-KTx 3.12, found in Androctonus amoreuxi (African fattail scorpion).